Reading from the N-terminus, the 278-residue chain is Large ribosomal subunit protein uL2c (278 aa).

The tract at residues 224–267 is disordered; it reads VVMNPVDHPHGGGEGRAPIGRKKPLTPWGHTALGGRSRKNHKYS.

This sequence belongs to the universal ribosomal protein uL2 family. Part of the 50S ribosomal subunit.

It localises to the plastid. It is found in the chloroplast. This Huperzia lucidula (Shining clubmoss) protein is Large ribosomal subunit protein uL2c (rpl2).